The following is a 139-amino-acid chain: D-ribose pyranase (139 aa).

The Proton donor role is filled by His-20. Substrate-binding positions include Asp-28, His-106, and 128–130 (FAN).

This sequence belongs to the RbsD / FucU family. RbsD subfamily. As to quaternary structure, homodecamer.

The protein resides in the cytoplasm. The enzyme catalyses beta-D-ribopyranose = beta-D-ribofuranose. It functions in the pathway carbohydrate metabolism; D-ribose degradation; D-ribose 5-phosphate from beta-D-ribopyranose: step 1/2. Functionally, catalyzes the interconversion of beta-pyran and beta-furan forms of D-ribose. The chain is D-ribose pyranase from Klebsiella pneumoniae (strain 342).